Here is a 550-residue protein sequence, read N- to C-terminus: MSTYSIPYYNQMNGNYNNGMPQQTTAANQQAFPQQQQPTTTGNASQQQQQAAATAAAAAVQQPYNYMFYQQQGQPGQQTGQTAGQQQQQQQQQQQYDYNTYNRYQYPAATSQGNYYQQTIPNQLSQPQPQHYNGSNRNYTSAPSGAPIPSNSTSGPSQQPPLPGQQAVPIPPHVSTMQQPTPVQDTLNASSTSTVGQFQPPGIRPRVTTTMWEDEKTLCYQVDANNVSVVRRADNNMINGTKLLNVAQMTRGRRDGILKSEKVRHVVKIGSMHLKGVWIPFERALAMAQREQIVDMLYPLFVRDIKRVIQTGVTPNAAAATAAAAATATSASAPPPPPPPVAAATTTAATAISKSSSGNGNSISATSGGSNVSGASGAGSTTSPVNTKAATTAGTPQGNYYQTYNQQQYPQQYGQYNAPGKNQNTPASQPGSTTNDQYLQQQQQMYGYQSNYYQGGAANSSYYPNYYQQQQPNYASSYPYQQQQQKQQQQQPNQQQQSDQQQTSTPSGGAGTRSVHQSPQVQSLTQGSVHPSPQQHQANQSASTVAKEEK.

3 disordered regions span residues 17-48 (NNGM…SQQQ), 72-95 (QGQP…QQQQ), and 123-182 (QLSQ…QPTP). Positions 123 to 153 (QLSQPQPQHYNGSNRNYTSAPSGAPIPSNST) are enriched in polar residues. Phosphothreonine occurs at positions 181 and 208. The HTH APSES-type domain occupies 206-312 (RVTTTMWEDE…RDIKRVIQTG (107 aa)). The segment at residues 240–261 (GTKLLNVAQMTRGRRDGILKSE) is a DNA-binding region (H-T-H motif). 2 disordered regions span residues 329–435 (TSAS…STTN) and 476–550 (SSYP…KEEK). Residues 342–383 (AAATTTAATAISKSSSGNGNSISATSGGSNVSGASGAGSTTS) are compositionally biased toward low complexity. Polar residues predominate over residues 384–394 (PVNTKAATTAG). Over residues 395–416 (TPQGNYYQTYNQQQYPQQYGQY) the composition is skewed to low complexity. The span at 420–435 (GKNQNTPASQPGSTTN) shows a compositional bias: polar residues. A compositionally biased stretch (low complexity) spans 476 to 502 (SSYPYQQQQQKQQQQQPNQQQQSDQQQ). Over residues 514-544 (SVHQSPQVQSLTQGSVHPSPQQHQANQSAST) the composition is skewed to polar residues.

Belongs to the EFG1/PHD1/stuA family. Interacts with CZF1 and FLO8. In terms of processing, thr-208 is a phosphorylation target to promote hyphal induction by a subset of environmental cues. Phosphorylation at Thr-181 by the CDc28/HGC1 complex represses cell separation genes and leads to hyphal chain formation.

The protein localises to the nucleus. Functionally, transcriptional regulator of the switch between 2 heritable states, the white and opaque states. These 2 cell types differ in many characteristics, including cell structure, mating competence, and virulence. Each state is heritable for many generations, and switching between states occurs stochastically, at low frequency. Antagonizes the action of WOR1, WOR2 and CZF1, and promotes the white state. In white cells, EFG1 represses WOR1 indirectly through WOR2 to maintain white cell identity. Binds target gene promoters at the EFG1 recognition sequence (EGRbox) TATGCATA. Acts as a major regulator of cell wall dynamics and plays a role in interactions with extracellular matrices. Required for TOR1-dependent cellular aggregation and adhesin expression. Required for both normoxic and hypoxic biofilm formation. Hypoxic biofilm formation is a major cause of perseverance and antifungal resistance during infections. Contributes to virulence by regulating hyphal formation and the factors that enable C.albicans to invade and injure endothelial cells. Required for the formation of thick-walled big resting spores called chlamydospores, which survive in unfavorable conditions. Mediates the expression of virulence factors SAP4, SAP5and SAP6 during infection. Involved in drug resistance by regulating the expression of ERG3. The sequence is that of Enhanced filamentous growth protein 1 (EFG1) from Candida albicans (strain SC5314 / ATCC MYA-2876) (Yeast).